Consider the following 1465-residue polypeptide: MSRIVKKGIVKIDQEQDEETFRENLAVQRNASAFFEKYDRTEVQELLTTTLVSWLAAKDDARSQLETPCGLMSQMNNAGFSTAILLTPVDPTALLDYREVHQILRELAIGIYCLNQIPSISLEANFDQSSSCQLPPAYYDTRVGQILIQIDYMLKALWHGIYMPKEKRARFSELWRTIMDIDLDGKPQTTKNVFSEFSSAGLVDITNDPDFNGIYDEDMNEDPTYEPNSPEEKAVFMKYAESIMMKLTFSTVQIQQHENIFIFETAYWLSNAIKYNQDYLDICTYQRLQKRLYLQKKVIQKHFEKKKEIRRGMGYLKLICFLIPFLLSLKRKMKVPYLNSLLPPFSDDKVKTERELPPFIYGRDFKCQNFDYKQHQYFHVHGGIEFDISTHPVESALDEFKKNVEKIWECASSASAEDAGYKEVYPIPVMELNGKSYYVIHFELEIFYQQLYKTQWWVAINETVNNLKVKRLPLTEDQLHEQFKKKFGLKKAMKCKSIPFGVKSAVERGLSAVFYTFSRKTSSSTINVSDEAGYAIFHHAALHNRVSVICQLWSANFNVNQRRFIMFSQADSSKVDMKKERNGPTPLHLAAQACSLEATICLLCFKADYTLTEKRGWMPIHFAAFYDNICILIALCRKDPSLLEAEATAENQCTPLLLAATSGALDTIQYLFSLGANWRKTDTKGNNIIHLSVLAFHTEVLKYIIELNIPELPVWETLVEMLQCESSKRRMMAVMSLEVICLANDRYWQCILDAGTIPALVNLLKSPQIKLQYKTVGLLSNISTHVSIVHAIVEAGGIPAVINLLTSDEPELHSRCAIILYDVAKCENKDVIAKYSGIPALINLLSLNKESVLVNVMNCIRVLCMGNESNQQSMKDNNGIQYLIQFLSSDSDVLKALSSATIAEVARDNKEVQDAIAKEGAIPPLVTLFKGKQLSVQVKGAMAVESLANCNPLIQKEFLERELTKDLLKLLQAFQIDVKEQGAIALWALAGQTLKQQKYMAEQIGYNLIISMLLSPSAKMQYVGGEAVIALSKDSRMHQNQICEGKGIAPLVRLLRINKIPEGTLLSVIRAVGSICIGVAHTSNPMSQQFVVEENALPVLIQLLRNHPSINIRVEVAFSLACIVLGNNSLKKELQNDEGFEYSDVLYLLHSKDKEVCLKAGYALTLFAFNDRFQQHLILETGLITVSIFEPFLQSSVETERAMAAFQIIILAKAIIDVEHVTLYGRGIQILADSLNSVHAPTIALTGNIIASLAHSRAGIPEAFVSLGTVQRLCYHLYARSEEVRTACSCALGYLTYNAHAFRLLLTECRNKPNQFLRITNNISKDAKINPAFLKEFQLQQRMGLPSLSLERNGGPPVIPVFKKGKEHRQKTRPKIQPRDSLTLLPPVTNVKELFRTTHKANISHNTFSFPSGVSSDIINVSRPRIAFLNKLGKDEQKANPDPPAFLNKLGKDEQNANPDPAESQ.

The chain crosses the membrane as a helical span at residues 313–329; the sequence is MGYLKLICFLIPFLLSL. ANK repeat units follow at residues 532–561, 582–611, 615–644, 651–680, and 684–714; these read AGYAIFHHAALHNRVSVICQLWSANFNVNQ, NGPTPLHLAAQACSLEATICLLCFKADYTL, RGWMPIHFAAFYDNICILIALCRKDPSLLE, NQCTPLLLAATSGALDTIQYLFSLGANWRK, and KGNNIIHLSVLAFHTEVLKYIIELNIPELPV. 6 ARM repeats span residues 745 to 784, 786 to 825, 827 to 865, 868 to 907, 910 to 949, and 1085 to 1125; these read DRYWQCILDAGTIPALVNLLKSPQIKLQYKTVGLLSNIST, VSIVHAIVEAGGIPAVINLLTSDEPELHSRCAIILYDVAK, ENKDVIAKYSGIPALINLLSLNKESVLVNVMNCIRVLCM, ESNQQSMKDNNGIQYLIQFLSSDSDVLKALSSATIAEVAR, KEVQDAIAKEGAIPPLVTLFKGKQLSVQVKGAMAVESLAN, and PMSQ…CIVL. Residues 1431–1465 form a disordered region; sequence KLGKDEQKANPDPPAFLNKLGKDEQNANPDPAESQ.

The protein localises to the membrane. The protein is Ankyrin and armadillo repeat-containing protein (Ankar) of Mus musculus (Mouse).